The primary structure comprises 767 residues: Two-component response regulator-like PRR73 (767 aa).

The tract at residues 1–64 (MGSACEAGTD…EPQQTDEQKE (64 aa)) is disordered. The Response regulatory domain occupies 82–200 (RVLLVENDDS…ELKNLWQHVW (119 aa)). Positions 205 to 214 (SSSGSGSESG) are enriched in low complexity. Disordered stretches follow at residues 205-272 (SSSG…QSSW), 312-388 (RWLP…NEPT), 476-546 (ASNQ…RGKV), 646-701 (ANYS…SGSG), and 727-767 (NFGK…DEDR). Positions 238–252 (DNEDDDDNDEDDDDL) are enriched in acidic residues. Composition is skewed to polar residues over residues 263 to 272 (DNGSGTQSSW), 343 to 361 (RNSSMEYQSSPREMSVNPT), and 488 to 497 (CSPQDNSSEA). Residues 518 to 531 (GSNGSSNNNDMGSS) are compositionally biased toward low complexity. Residues 532–543 (TKNAITKPSSNR) show a composition bias toward polar residues. A compositionally biased stretch (gly residues) spans 689 to 700 (GAGGGNGSGSGS). The CCT domain maps to 712–754 (REAALNKFRQKRKVRNFGKKVRYQSRKRLAEQRPRIRGQFVRQ). Basic residues predominate over residues 727-738 (NFGKKVRYQSRK).

It belongs to the ARR-like family.

It is found in the nucleus. Its function is as follows. Controls photoperiodic flowering response. Seems to be one of the component of the circadian clock. Expression of several members of the ARR-like family is controlled by circadian rhythm. The particular coordinated sequential expression of PRR73, PRR37, PRR95, PRR59 and PPR1 result to circadian waves that may be at the basis of the endogenous circadian clock. This Oryza sativa subsp. japonica (Rice) protein is Two-component response regulator-like PRR73 (PRR73).